Reading from the N-terminus, the 803-residue chain is Mastermind-like domain-containing protein 1 (803 aa).

4 disordered regions span residues 22-50 (NRQE…TGMA), 292-374 (LAAS…APSS), 420-452 (GHLI…QQSF), and 486-641 (QQQQ…PDQS). Over residues 296–309 (KQGSATKQGSNRNW) the composition is skewed to polar residues. Pro residues predominate over residues 312–340 (LPPPGLSPPYLPVPSPHPPPPQPPPPPFS). Low complexity predominate over residues 347–362 (SCMSSSSLSGSAVQSS). 4 stretches are compositionally biased toward polar residues: residues 363–374 (PNALLSSMAPSS), 441–452 (NLSSPGLPQQSF), 495–526 (HQAN…SSSP), and 547–564 (PSPQ…QSSL). Low complexity predominate over residues 571–588 (ATPAHAPSATASSTATAT). The segment covering 592–622 (QHHHQQHHHQQHHHQQQHHQQQHHQQHHHQQ) has biased composition (basic residues). The segment covering 623-641 (QQHQQQQHQQQQQQQPDQS) has biased composition (low complexity).

The protein belongs to the mastermind family.

The protein resides in the nucleus. Transactivates the HES3 promoter independently of NOTCH proteins. HES3 is a non-canonical NOTCH target gene which lacks binding sites for RBPJ. Required for testosterone production. The sequence is that of Mastermind-like domain-containing protein 1 (Mamld1) from Mus musculus (Mouse).